Here is a 296-residue protein sequence, read N- to C-terminus: Large ribosomal subunit protein uL18A (296 aa).

A disordered region spans residues P251–S296. The segment covering K255–R268 has biased composition (basic residues). Positions L271–A281 are enriched in basic and acidic residues.

The protein belongs to the universal ribosomal protein uL18 family. In terms of assembly, component of the large ribosomal subunit (LSU). Part of a LSU subcomplex, the 5S RNP which is composed of the 5S RNA, RPL5 and RPL11.

Its subcellular location is the cytoplasm. It localises to the nucleus. The protein localises to the nucleolus. Functionally, component of the ribosome, a large ribonucleoprotein complex responsible for the synthesis of proteins in the cell. The small ribosomal subunit (SSU) binds messenger RNAs (mRNAs) and translates the encoded message by selecting cognate aminoacyl-transfer RNA (tRNA) molecules. The large subunit (LSU) contains the ribosomal catalytic site termed the peptidyl transferase center (PTC), which catalyzes the formation of peptide bonds, thereby polymerizing the amino acids delivered by tRNAs into a polypeptide chain. The nascent polypeptides leave the ribosome through a tunnel in the LSU and interact with protein factors that function in enzymatic processing, targeting, and the membrane insertion of nascent chains at the exit of the ribosomal tunnel. As part of the 5S RNP/5S ribonucleoprotein particle it is an essential component of the LSU, required for its formation and the maturation of rRNAs. It also couples ribosome biogenesis to p53/TP53 activation. As part of the 5S RNP it accumulates in the nucleoplasm and inhibits MDM2, when ribosome biogenesis is perturbed, mediating the stabilization and the activation of TP53. This is Large ribosomal subunit protein uL18A (rpl5-a) from Xenopus laevis (African clawed frog).